The chain runs to 874 residues: Breast cancer anti-estrogen resistance protein 1 (874 aa).

M1 bears the N-acetylmethionine mark. The 63-residue stretch at 3 to 65 (VPNVLAKALY…PGNRLKILVG (63 aa)) folds into the SH3 domain. The segment at 71–177 (PVGPGPGPPA…LYQVPPGPGS (107 aa)) is disordered. Over residues 73–88 (GPGPGPPATPPQPQPS) the composition is skewed to pro residues. A substrate for kinases region spans residues 119-420 (YLVPTPSKTQ…DGVYAVPPPA (302 aa)). Y132 bears the Phosphotyrosine mark. Polar residues predominate over residues 139-155 (PQFQSPPAKQTSTFSKQ). S143 carries the phosphoserine modification. 2 positions are modified to phosphotyrosine: Y238 and Y253. T273 carries the post-translational modification Phosphothreonine. S296 carries the phosphoserine modification. 3 positions are modified to phosphotyrosine: Y366, Y376, and Y414. The span at 374 to 388 (DLYDVPPGLRRPGPG) shows a compositional bias: low complexity. Disordered stretches follow at residues 374 to 394 (DLYD…YDVP), 409 to 450 (VDDG…SLEV), and 610 to 662 (RRTK…NSEG). Basic and acidic residues predominate over residues 420-430 (AEREAPTDGKR). The span at 431 to 448 (LSASSTGSTRSSQSASSL) shows a compositional bias: low complexity. Residues S432, S441, and S643 each carry the phosphoserine modification. Residues 621–659 (GSSSLHPNPTDKASSIQSRPLPSPPKFTSQDSPDGQYEN) are compositionally biased toward polar residues. Positions 639–647 (RPLPSPPKF) match the SH3-binding motif. The segment at 750–800 (FYLEQCEANLTTLTDAVDAFFTAVATNQPPKIFVAHSKFVILSAHKLVFIG) is divergent helix-loop-helix motif.

It belongs to the CAS family. As to quaternary structure, forms complexes in vivo with PTK2/FAK1, adapter protein CRKL and LYN kinase. Can heterodimerize with NEDD9. Component of a complex comprised of SH2D3C, BCAR1/CAS, and CRK. Within the complex, interacts with SH2D3C (via C-terminus), and CRK. Part of a complex comprised of PTPRA, BCAR1, BCAR3 (via SH2 domain) and SRC; the formation of the complex is dependent on integrin mediated-tyrosine phosphorylation of PTPRA. Interacts with BCAR3 (via Ras-GEF domain); the interaction regulates adhesion-dependent serine phosphorylation. Interacts with SMAD2 and SMAD3. Interacts with NPHP1. Interacts with PTK2B/PYK2. Interacts (via C-terminus) with SH2D3C/CHAT isoform 2 (via C-terminus). Interacts with activated CSPG4. Interacts with BMX, INPPL1/SHIP2 and PEAK1. Part of a collagen stimulated complex involved in cell migration composed of CDC42, CRK, TNK2 and BCAR1/p130cas. Interacts with TNK2 via SH3 domains. Interacts (when tyrosine-phosphorylated) with tensin TNS1; the interaction is increased by phosphorylation of TNS1. In terms of processing, PTK2/FAK1 activation mediates phosphorylation at the YDYVHL motif; phosphorylation is most likely catalyzed by SRC family members. SRC-family kinases are recruited to the phosphorylated sites and can phosphorylate other tyrosine residues. Tyrosine phosphorylation is triggered by integrin mediated adhesion of cells to the extracellular matrix. Dephosphorylated by PTPN14 at Tyr-132. Post-translationally, phosphorylated by SRC kinase in a EDN1- and PTK2B-mediated manner; phosphorylation strengthens its interaction with BCAR3 as part of the PTK2B/BCAR1/BCAR3/RAP1 signaling pathway. As to expression, expressed in olfactory sensory neurons (at protein level). Expressed abundantly in the liver, lung, brain, and at lower levels in the heart (at protein level).

It localises to the cell junction. The protein resides in the focal adhesion. The protein localises to the cytoplasm. It is found in the cell projection. Its subcellular location is the axon. Docking protein which plays a central coordinating role for tyrosine kinase-based signaling related to cell adhesion. Implicated in induction of cell migration and cell branching. Involved in the BCAR3-mediated inhibition of TGFB signaling. The sequence is that of Breast cancer anti-estrogen resistance protein 1 (Bcar1) from Mus musculus (Mouse).